The following is a 456-amino-acid chain: Phosphoglucomutase/phosphomannomutase (456 aa).

Catalysis depends on Ser101, which acts as the Phosphoserine intermediate. Residues Ser101, Asp243, Asp245, and Asp247 each coordinate Mg(2+). Phosphoserine; by autocatalysis is present on Ser101.

The protein belongs to the phosphohexose mutase family. As to quaternary structure, homotetramer. Mg(2+) serves as cofactor. Post-translationally, activated by phosphorylation.

The catalysed reaction is alpha-D-glucose 1-phosphate = alpha-D-glucose 6-phosphate. The enzyme catalyses alpha-D-mannose 1-phosphate = D-mannose 6-phosphate. Its function is as follows. Catalyzes the interconversion of glucose 1-phosphate and glucose 6-phosphate, and the interconversion of mannose 1-phosphate and mannose 6-phosphate. Also displays low activity with deoxyribose 1-phosphate and glucosamine 1-phosphate. This chain is Phosphoglucomutase/phosphomannomutase, found in Thermococcus kodakarensis (strain ATCC BAA-918 / JCM 12380 / KOD1) (Pyrococcus kodakaraensis (strain KOD1)).